A 1158-amino-acid polypeptide reads, in one-letter code: Type IV pilus biogenesis factor PilY1 (1158 aa).

An N-terminal signal peptide occupies residues 1-29; sequence MIHQITRAGKSLLAAGCTLSILFASDSYA. Ca(2+) contacts are provided by D841, N843, D845, I847, and D849.

It belongs to the PilY1 family.

The protein resides in the fimbrium. It is found in the membrane. Its subcellular location is the cytoplasm. It localises to the cytosol. Involved in pilus assembly, twitching motility and adhesion to host cells. Primes type IV pili (T4P) assembly and is required for inclusion of minor pilins PilV, PilW and PilX to the surface pili. Stabilizes assembled pilus fibers likely by antagonizing retraction mediated by PilT. Calcium-binding and calcium release by PilY1 seem to be essential for twitching motility and for regulation of pilus retraction dynamics of PilT. Regulates surface-activated virulence possibly by acting as a surface-attachment mechanosensor. This chain is Type IV pilus biogenesis factor PilY1, found in Pseudomonas aeruginosa (strain UCBPP-PA14).